The following is a 153-amino-acid chain: ORM1-like protein 1 (153 aa).

The Cytoplasmic segment spans residues 1–27; that stretch reads MNVGVAHSEVNPNTRVMNSRGIWLTYA. Helical transmembrane passes span 28-46 and 47-64; these read LGVG…FSVP and VVWT…YVFM. Residues 65 to 105 are Cytoplasmic-facing; sequence HAVKGTPFETPDQGKARLLTHWEQLDYGVQFTSSRKFFTIS. Transmembrane regions (helical) follow at residues 106–123 and 124–140; these read PIIL…DTAH and FVIN…PKLP. Residues 141 to 153 are Cytoplasmic-facing; the sequence is QLHGVRIFGINKY.

The protein belongs to the ORM family. In terms of assembly, ceramide-sensitive subunit of the serine palmitoyltransferase (SPT) complex, which is also composed of SPTLC1, SPTLC2/3 and SPTSSA/B.

The protein resides in the endoplasmic reticulum membrane. Its function is as follows. Plays an essential role in the homeostatic regulation of sphingolipid de novo biosynthesis by modulating the activity of the serine palmitoyltransferase (SPT) in response to ceramide levels. When complexed to SPT, the binding of ceramides to its N-terminus stabilizes a conformation that block SPT substrate entry, hence preventing SPT catalytic activity. Through this mechanism, maintains ceramide levels at sufficient concentrations for the production of complex sphingolipids, but which prevents the accumulation of ceramides to levels that trigger apoptosis. This Danio rerio (Zebrafish) protein is ORM1-like protein 1 (ormdl1).